A 678-amino-acid chain; its full sequence is Glycine--tRNA ligase beta subunit (678 aa).

This sequence belongs to the class-II aminoacyl-tRNA synthetase family. Tetramer of two alpha and two beta subunits.

It localises to the cytoplasm. It carries out the reaction tRNA(Gly) + glycine + ATP = glycyl-tRNA(Gly) + AMP + diphosphate. The sequence is that of Glycine--tRNA ligase beta subunit from Streptococcus suis (strain 98HAH33).